We begin with the raw amino-acid sequence, 368 residues long: GDP-fucose transporter 1 (368 aa).

9 helical membrane-spanning segments follow: residues 64 to 84, 98 to 118, 141 to 161, 166 to 186, 195 to 215, 217 to 237, 251 to 271, 287 to 307, and 332 to 352; these read LSTIASVIAFYFFISISLVFL, LFITWYQQIISFVSIYIMTSI, VLPVTAVLTGMVIFNNLCLEY, FYQVARSLTICFSLILTYIVL, TMACLVVFLGFVLGSAGEVNF, WLGIIFGLLSSFFVALYSIAV, LSIYNTAISIGLIFPLILVSG, FWFYMTVAGLMGYLISISVFM, and AVVFWGNPISTQNAVGILLVI.

Belongs to the TPT transporter family. SLC35C subfamily.

It localises to the golgi apparatus membrane. It carries out the reaction GMP(out) + GDP-beta-L-fucose(in) = GMP(in) + GDP-beta-L-fucose(out). Functionally, antiporter specific for GDP-l-fucose and depending on the concomitant reverse transport of GMP. Involved in GDP-fucose import from the cytoplasm into the Golgi lumen. In Dictyostelium discoideum (Social amoeba), this protein is GDP-fucose transporter 1 (slc35c1).